A 315-amino-acid chain; its full sequence is ADP-L-glycero-D-manno-heptose-6-epimerase (315 aa).

Residues 10 to 11 (FI), 31 to 32 (DD), Lys-38, Lys-53, 76 to 80 (QGACS), and Asn-93 contribute to the NADP(+) site. The active-site Proton acceptor is the Tyr-140. Position 144 (Lys-144) interacts with NADP(+). Asn-169 serves as a coordination point for substrate. The NADP(+) site is built by Val-170 and Lys-178. The active-site Proton acceptor is the Lys-178. Substrate is bound by residues Ser-180, His-187, 201-204 (FEGC), Arg-214, and Tyr-278.

This sequence belongs to the NAD(P)-dependent epimerase/dehydratase family. HldD subfamily. As to quaternary structure, homopentamer. The cofactor is NADP(+).

The catalysed reaction is ADP-D-glycero-beta-D-manno-heptose = ADP-L-glycero-beta-D-manno-heptose. Its pathway is nucleotide-sugar biosynthesis; ADP-L-glycero-beta-D-manno-heptose biosynthesis; ADP-L-glycero-beta-D-manno-heptose from D-glycero-beta-D-manno-heptose 7-phosphate: step 4/4. Catalyzes the interconversion between ADP-D-glycero-beta-D-manno-heptose and ADP-L-glycero-beta-D-manno-heptose via an epimerization at carbon 6 of the heptose. The chain is ADP-L-glycero-D-manno-heptose-6-epimerase from Syntrophotalea carbinolica (strain DSM 2380 / NBRC 103641 / GraBd1) (Pelobacter carbinolicus).